Consider the following 169-residue polypeptide: S-ribosylhomocysteine lyase (169 aa).

3 residues coordinate Fe cation: His-54, His-58, and Cys-128.

Belongs to the LuxS family. As to quaternary structure, homodimer. The cofactor is Fe cation.

The catalysed reaction is S-(5-deoxy-D-ribos-5-yl)-L-homocysteine = (S)-4,5-dihydroxypentane-2,3-dione + L-homocysteine. In terms of biological role, involved in the synthesis of autoinducer 2 (AI-2) which is secreted by bacteria and is used to communicate both the cell density and the metabolic potential of the environment. The regulation of gene expression in response to changes in cell density is called quorum sensing. Catalyzes the transformation of S-ribosylhomocysteine (RHC) to homocysteine (HC) and 4,5-dihydroxy-2,3-pentadione (DPD). The polypeptide is S-ribosylhomocysteine lyase (Shewanella sp. (strain ANA-3)).